The sequence spans 306 residues: Ribonuclease BN (306 aa).

Positions 64, 66, 68, 69, 141, 212, and 270 each coordinate Zn(2+). The active-site Proton acceptor is the Asp68.

Belongs to the RNase Z family. RNase BN subfamily. As to quaternary structure, homodimer. It depends on Zn(2+) as a cofactor.

In terms of biological role, zinc phosphodiesterase, which has both exoribonuclease and endoribonuclease activities. This chain is Ribonuclease BN, found in Klebsiella pneumoniae (strain 342).